A 144-amino-acid chain; its full sequence is Large ribosomal subunit protein uL22 (144 aa).

The span at 124–137 shows a compositional bias: basic residues; it reads RLKKRVLGQNKRKQ. Residues 124–144 form a disordered region; sequence RLKKRVLGQNKRKQSVSGEKK.

This sequence belongs to the universal ribosomal protein uL22 family. Part of the 50S ribosomal subunit.

Its function is as follows. This protein binds specifically to 23S rRNA; its binding is stimulated by other ribosomal proteins, e.g. L4, L17, and L20. It is important during the early stages of 50S assembly. It makes multiple contacts with different domains of the 23S rRNA in the assembled 50S subunit and ribosome. The globular domain of the protein is located near the polypeptide exit tunnel on the outside of the subunit, while an extended beta-hairpin is found that lines the wall of the exit tunnel in the center of the 70S ribosome. This Mycoplasmoides gallisepticum (strain R(low / passage 15 / clone 2)) (Mycoplasma gallisepticum) protein is Large ribosomal subunit protein uL22.